The following is a 66-amino-acid chain: Large ribosomal subunit protein bL33c (66 aa).

The protein belongs to the bacterial ribosomal protein bL33 family.

Its subcellular location is the plastid. It localises to the chloroplast. The protein is Large ribosomal subunit protein bL33c of Dioscorea elephantipes (Elephant's foot yam).